Here is a 262-residue protein sequence, read N- to C-terminus: Ribosomal RNA small subunit methyltransferase A (262 aa).

6 residues coordinate S-adenosyl-L-methionine: H13, L15, G40, E61, D85, and N103.

Belongs to the class I-like SAM-binding methyltransferase superfamily. rRNA adenine N(6)-methyltransferase family. RsmA subfamily.

The protein resides in the cytoplasm. The catalysed reaction is adenosine(1518)/adenosine(1519) in 16S rRNA + 4 S-adenosyl-L-methionine = N(6)-dimethyladenosine(1518)/N(6)-dimethyladenosine(1519) in 16S rRNA + 4 S-adenosyl-L-homocysteine + 4 H(+). Functionally, specifically dimethylates two adjacent adenosines (A1518 and A1519) in the loop of a conserved hairpin near the 3'-end of 16S rRNA in the 30S particle. May play a critical role in biogenesis of 30S subunits. This chain is Ribosomal RNA small subunit methyltransferase A, found in Bordetella petrii (strain ATCC BAA-461 / DSM 12804 / CCUG 43448).